The chain runs to 422 residues: Probable tRNA pseudouridine synthase D 2 (422 aa).

The Nucleophile role is filled by Asp89. In terms of domain architecture, TRUD spans 160–371 (GAPNYFDSQR…IYSERKILSI (212 aa)).

The protein belongs to the pseudouridine synthase TruD family.

The catalysed reaction is uridine(13) in tRNA = pseudouridine(13) in tRNA. Functionally, could be responsible for synthesis of pseudouridine from uracil-13 in transfer RNAs. In Methanocaldococcus jannaschii (strain ATCC 43067 / DSM 2661 / JAL-1 / JCM 10045 / NBRC 100440) (Methanococcus jannaschii), this protein is Probable tRNA pseudouridine synthase D 2.